Reading from the N-terminus, the 97-residue chain is Pyrin domain-containing protein 2 (97 aa).

The Pyrin domain occupies 1 to 94 (MASSAELDFN…SGRADEHCVM (94 aa)).

Interacts with PYCARD/ASC (via pyrin domain). Interacts with NLRP2 (via pyrin domain). As to expression, predominantly expressed in peripheral blood. Weakly expressed in testis.

It localises to the cytoplasm. Its subcellular location is the nucleus. May play a role in innate immunity by disrupting the interaction between PYCARD and NLRP3, thereby regulating the NLRP3 inflammasome. May also inhibit NF-kappa-B signaling distally by affecting the nuclear accumulation of RELA. In Homo sapiens (Human), this protein is Pyrin domain-containing protein 2.